We begin with the raw amino-acid sequence, 267 residues long: MLKIGVVGCGAIASLITKALMSDRLNKAEVLAFYDGNLEKAEKLAMETGADFCRSLDELVSKDLDLIVECASVTAVEDTVIKSLNNDKDVIVMSVGAFADKDLFLKLYKLAEKLGRKIYIPSGAIAGIDAVKSGSLGKISEVTLTTTKPVHGLKSALEEQGLNTDDIMDPKVVFEGTVFEAISKFPQNINVSVVLSLASKYPAKVKIIADPNLMVNRHEILVKGSIGTIKTCVENNPCKDNPKTSALAAYSAIQLIKDLSEPVRIGT.

Residues alanine 124 and asparagine 190 each contribute to the NAD(+) site. Histidine 218 is an active-site residue.

It belongs to the L-aspartate dehydrogenase family.

It carries out the reaction L-aspartate + NADP(+) + H2O = oxaloacetate + NH4(+) + NADPH + H(+). The enzyme catalyses L-aspartate + NAD(+) + H2O = oxaloacetate + NH4(+) + NADH + H(+). Its pathway is cofactor biosynthesis; NAD(+) biosynthesis; iminoaspartate from L-aspartate (dehydrogenase route): step 1/1. Its function is as follows. Specifically catalyzes the NAD or NADP-dependent dehydrogenation of L-aspartate to iminoaspartate. This Methanococcus maripaludis (strain C7 / ATCC BAA-1331) protein is L-aspartate dehydrogenase.